A 119-amino-acid chain; its full sequence is Large ribosomal subunit protein bL20 (119 aa).

It belongs to the bacterial ribosomal protein bL20 family.

Functionally, binds directly to 23S ribosomal RNA and is necessary for the in vitro assembly process of the 50S ribosomal subunit. It is not involved in the protein synthesizing functions of that subunit. This chain is Large ribosomal subunit protein bL20, found in Azorhizobium caulinodans (strain ATCC 43989 / DSM 5975 / JCM 20966 / LMG 6465 / NBRC 14845 / NCIMB 13405 / ORS 571).